Reading from the N-terminus, the 149-residue chain is Nucleoside diphosphate kinase (149 aa).

ATP is bound by residues K9, F57, R85, T91, R102, and N112. The Pros-phosphohistidine intermediate role is filled by H115.

Belongs to the NDK family. Mg(2+) is required as a cofactor.

Its subcellular location is the cytoplasm. The enzyme catalyses a 2'-deoxyribonucleoside 5'-diphosphate + ATP = a 2'-deoxyribonucleoside 5'-triphosphate + ADP. It catalyses the reaction a ribonucleoside 5'-diphosphate + ATP = a ribonucleoside 5'-triphosphate + ADP. In terms of biological role, major role in the synthesis of nucleoside triphosphates other than ATP. The ATP gamma phosphate is transferred to the NDP beta phosphate via a ping-pong mechanism, using a phosphorylated active-site intermediate. The chain is Nucleoside diphosphate kinase from Methanospirillum hungatei JF-1 (strain ATCC 27890 / DSM 864 / NBRC 100397 / JF-1).